We begin with the raw amino-acid sequence, 463 residues long: SCF E3 ubiquitin ligase complex F-box protein pof2 (463 aa).

One can recognise an F-box domain in the interval 1 to 42; sequence MRVPNEVCFNILSYLEADELRCKSTVCTSWRNFIIPTLWEKV. 10 LRR repeats span residues 145 to 170, 171 to 196, 198 to 220, 225 to 247, 249 to 271, 278 to 299, 304 to 326, 328 to 353, 354 to 378, and 380 to 405; these read CPNLKALNIGNCGLVEDTGMVQIIKR, CPYLNRLIIPNCRKLTDVSLQILSEK, DLIELDISGCEGFHNADTLSRLV, GLKELSMDGCTELSHFITFLNLN, ELDAMRALSLNNLPDLKDSDIEL, KLNSLFLSKCIGLTDSSLLSLT, SLTTLHLGHCYEITDIGVQCLLK, CKNITYIDFGGCLRLSDIAVSAIAKL, PYLQRVGLVKCICLTDLSVILLSGS, and SRNLERVHLSYCIGLTAKSVSYLMYN.

Part of a SCF E3 ubiquitin ligase complex. Interacts with skp1.

Its subcellular location is the mitochondrion. Its function is as follows. Involved in substrate recognition in ubiquitin-dependent degradation. This is SCF E3 ubiquitin ligase complex F-box protein pof2 (pof2) from Schizosaccharomyces pombe (strain 972 / ATCC 24843) (Fission yeast).